Consider the following 653-residue polypeptide: Endoglin (653 aa).

An N-terminal signal peptide occupies residues 1-26; it reads MDRGVLPLPITLLFVIYSFVPTTGLA. The OR1, N-terminal part stretch occupies residues 27-47; the sequence is ERVGCDLQPVDPTRGEVTFTT. A required for interaction with GDF2 region spans residues 27–337; the sequence is ERVGCDLQPV…SSCGGVFQTT (311 aa). The Extracellular portion of the chain corresponds to 27–581; the sequence is ERVGCDLQPV…IVSPDLSGKG (555 aa). Disulfide bonds link Cys-31–Cys-209, Cys-54–Cys-184, Cys-244–Cys-330, Cys-350–Cys-382, Cys-363–Cys-442, Cys-394–Cys-412, and Cys-493–Cys-549. An OR2 region spans residues 48–201; that stretch reads SQVSEGCVAQ…MGATLEWQPR (154 aa). N-linked (GlcNAc...) asparagine glycosylation is found at Asn-89, Asn-135, and Asn-266. The interval 202–330 is OR1, C-terminal part; the sequence is AQTPVQSCRL…SNVSLRASSC (129 aa). Residues 270–282 form an essential for interaction with GDF2 region; it reads QILTTGEYSVKIF. N-linked (GlcNAc...) asparagine glycans are attached at residues Asn-307 and Asn-322. The region spanning 363–510 is the ZP domain; sequence CGNQVMTLAL…GDMVELIQSR (148 aa). Residues 582-606 traverse the membrane as a helical segment; that stretch reads LVLPSVLGITFGAFLIGALLTAALW. Residues 607 to 653 are Cytoplasmic-facing; sequence YIYSHTRGPSKREPVVAVAAPASSESSSTNHSIGSTQSTPCSTSSMA. The span at 624–634 shows a compositional bias: low complexity; the sequence is VAAPASSESSS. The segment at 624-653 is disordered; it reads VAAPASSESSSTNHSIGSTQSTPCSTSSMA. Residues 635–653 show a composition bias toward polar residues; it reads TNHSIGSTQSTPCSTSSMA. A phosphoserine; by TGFBR1 mark is found at Ser-641 and Ser-644.

In terms of assembly, homodimer; disulfide-linked. Forms a heteromeric complex with the signaling receptors for transforming growth factor-beta: TGFBR1 and/or TGFBR2. Interacts with TGFB1. It is able to bind TGFB1 and TGFB2 with high affinity, but not TGFB3. Interacts with GDF2, forming a heterotetramer with a 2:2 stoichiometry. Interacts with ACVRL1. Can form a heteromeric complex with GDF2 and ACVRL1. Interacts with BMP10. Interacts with DYNLT4. Interacts with ARRB2. Detected on blood vessels (at protein level). Detected on adult pulmonary artery, capillaries supporting the heart muscle and lung alveolar capillary endothelial cells. Endoglin is restricted to endothelial cells in all tissues except bone marrow and is also found in stromal cells within the connective tissue of intestine, stomach, heart, skeletal muscle, uterus, ovary, oviduct, testis and thymus.

It localises to the cell membrane. Its function is as follows. Vascular endothelium glycoprotein that plays an important role in the regulation of angiogenesis. Required for normal structure and integrity of adult vasculature. Regulates the migration of vascular endothelial cells. Required for normal extraembryonic angiogenesis and for embryonic heart development. May regulate endothelial cell shape changes in response to blood flow, which drive vascular remodeling and establishment of normal vascular morphology during angiogenesis. May play a role in the binding of endothelial cells to integrins. Acts as a TGF-beta coreceptor and is involved in the TGF-beta/BMP signaling cascade that ultimately leads to the activation of SMAD transcription factors. Required for GDF2/BMP9 signaling through SMAD1 in endothelial cells and modulates TGFB1 signaling through SMAD3. In Mus musculus (Mouse), this protein is Endoglin (Eng).